The primary structure comprises 358 residues: Membrane-bound lytic murein transglycosylase C (358 aa).

The N-terminal stretch at 1–16 (MKKILALLVIAPLLIS) is a signal peptide. Cysteine 17 carries N-palmitoyl cysteine lipidation. Cysteine 17 carries the S-diacylglycerol cysteine lipid modification.

This sequence belongs to the transglycosylase Slt family.

The protein localises to the cell outer membrane. It catalyses the reaction Exolytic cleavage of the (1-&gt;4)-beta-glycosidic linkage between N-acetylmuramic acid (MurNAc) and N-acetylglucosamine (GlcNAc) residues in peptidoglycan, from either the reducing or the non-reducing ends of the peptidoglycan chains, with concomitant formation of a 1,6-anhydrobond in the MurNAc residue.. Its function is as follows. Murein-degrading enzyme. May play a role in recycling of muropeptides during cell elongation and/or cell division. The protein is Membrane-bound lytic murein transglycosylase C of Serratia proteamaculans (strain 568).